The following is a 145-amino-acid chain: D-aminoacyl-tRNA deacylase (145 aa).

Positions 137-138 (GP) match the Gly-cisPro motif, important for rejection of L-amino acids motif.

It belongs to the DTD family. As to quaternary structure, homodimer.

It localises to the cytoplasm. It carries out the reaction glycyl-tRNA(Ala) + H2O = tRNA(Ala) + glycine + H(+). The catalysed reaction is a D-aminoacyl-tRNA + H2O = a tRNA + a D-alpha-amino acid + H(+). Functionally, an aminoacyl-tRNA editing enzyme that deacylates mischarged D-aminoacyl-tRNAs. Also deacylates mischarged glycyl-tRNA(Ala), protecting cells against glycine mischarging by AlaRS. Acts via tRNA-based rather than protein-based catalysis; rejects L-amino acids rather than detecting D-amino acids in the active site. By recycling D-aminoacyl-tRNA to D-amino acids and free tRNA molecules, this enzyme counteracts the toxicity associated with the formation of D-aminoacyl-tRNA entities in vivo and helps enforce protein L-homochirality. This is D-aminoacyl-tRNA deacylase from Shewanella sp. (strain ANA-3).